Reading from the N-terminus, the 336-residue chain is Atypical chemokine receptor 1 (336 aa).

At 1–63 the chain is on the extracellular side; it reads MGNCLHPAEL…CNLLDDSALP (63 aa). 3 N-linked (GlcNAc...) asparagine glycosylation sites follow: asparagine 16, asparagine 27, and asparagine 33. Intrachain disulfides connect cysteine 51-cysteine 276 and cysteine 129-cysteine 195. The chain crosses the membrane as a helical span at residues 64–84; it reads FFILVSVLGILASGIVLFMFF. The Cytoplasmic portion of the chain corresponds to 85 to 95; the sequence is RPLFHWQLCPG. The helical transmembrane segment at 96–116 threads the bilayer; it reads WPVLAQLAVGSALFSIVVPIL. Residues 117–129 are Extracellular-facing; sequence APGLGNTRSSALC. Residues 130–153 traverse the membrane as a helical segment; that stretch reads SLGYCVWYGSAFAQALLLGCHASL. Topologically, residues 154–166 are cytoplasmic; it reads GPKLGADQVPGLT. The chain crosses the membrane as a helical span at residues 167–187; the sequence is LGLSVGLWGVAALLTLPVTLA. Topologically, residues 188–207 are extracellular; it reads SGASGGLCTPVYSMELKALQ. The helical transmembrane segment at 208–228 threads the bilayer; the sequence is ATHAVACLAIFVLLPLGLFGA. Over 229–244 the chain is Cytoplasmic; sequence KGLKKALGMGPGPWMN. The chain crosses the membrane as a helical span at residues 245–265; that stretch reads ILWAWFIFWWPHGVVLGLDFL. Residues 266-287 lie on the Extracellular side of the membrane; sequence VRSKLLLLSTCLAQQALDLLLN. A helical membrane pass occupies residues 288–308; that stretch reads LAEALAILHCVATPLLLALFC. Topologically, residues 309–336 are cytoplasmic; it reads HQATRTLLPSLPLPEGWSSHLDTLGSKS.

It belongs to the G-protein coupled receptor 1 family. Atypical chemokine receptor subfamily.

It is found in the early endosome. Its subcellular location is the recycling endosome. The protein localises to the membrane. In terms of biological role, atypical chemokine receptor that controls chemokine levels and localization via high-affinity chemokine binding that is uncoupled from classic ligand-driven signal transduction cascades, resulting instead in chemokine sequestration, degradation, or transcytosis. Also known as interceptor (internalizing receptor) or chemokine-scavenging receptor or chemokine decoy receptor. Has a promiscuous chemokine-binding profile, interacting with inflammatory chemokines of both the CXC and the CC subfamilies but not with homeostatic chemokines. Acts as a receptor for chemokines including CCL2, CCL5, CCL7, CCL11, CCL13, CCL14, CCL17, CXCL5, CXCL6, IL8/CXCL8, CXCL11, GRO, RANTES, MCP-1 and TARC. May regulate chemokine bioavailability and, consequently, leukocyte recruitment through two distinct mechanisms: when expressed in endothelial cells, it sustains the abluminal to luminal transcytosis of tissue-derived chemokines and their subsequent presentation to circulating leukocytes; when expressed in erythrocytes, serves as blood reservoir of cognate chemokines but also as a chemokine sink, buffering potential surges in plasma chemokine levels. The chain is Atypical chemokine receptor 1 (ACKR1) from Papio hamadryas (Hamadryas baboon).